A 445-amino-acid chain; its full sequence is Argininosuccinate synthase (445 aa).

Residues 17-25 and Ala43 each bind ATP; that span reads AFSGGLDTS. Tyr99 lines the L-citrulline pocket. ATP is bound by residues Gly129 and Thr131. Residues Thr131, Asn135, and Asp136 each coordinate L-aspartate. Residue Asn135 participates in L-citrulline binding. Asp136 contributes to the ATP binding site. Residues Arg139 and Ser192 each contribute to the L-citrulline site. Asp194 contacts ATP. Residues Thr201, Glu203, and Glu280 each contribute to the L-citrulline site.

This sequence belongs to the argininosuccinate synthase family. Type 2 subfamily. In terms of assembly, homotetramer.

Its subcellular location is the cytoplasm. The catalysed reaction is L-citrulline + L-aspartate + ATP = 2-(N(omega)-L-arginino)succinate + AMP + diphosphate + H(+). The protein operates within amino-acid biosynthesis; L-arginine biosynthesis; L-arginine from L-ornithine and carbamoyl phosphate: step 2/3. This chain is Argininosuccinate synthase, found in Polaromonas naphthalenivorans (strain CJ2).